The following is a 395-amino-acid chain: MAKEKFDRSKEHANIGTIGHVDHGKTTLTAAIATVLAKNGDTVAQSYDMIDNAPEEKERGITINTSHIEYQTDKRHYAHVDCPGHADYVKNMITGAAQMDGGILVVSAADGPMPQTREHILLSRNVGVPALVVFLNKADMVDDEELLELVEMEVRDLLSEYDFPGDDVPVIVGSALKALEGDAEYEQKILDLMQAVDDYIPTPERDSDKPFMMPVEDVFSITGRGTVATGRVERGQIKVGEEVEIIGITEESMKTTVTGVEMFRKLLDYAEAGDNIGALLRGVAREDVQRGQVLAAPGSITPHTKFKADVYVLSKDEGGRHTPFFTNYRPQFYFRTTDVTGVVNLPEGTEMVMPGDNVEMTVELIAPIAIEDGTRFSIREGGRTVGSGVVTEIQQ.

A tr-type G domain is found at 10–204 (KEHANIGTIG…AVDDYIPTPE (195 aa)). Residues 19–26 (GHVDHGKT) form a G1 region. Residue 19–26 (GHVDHGKT) coordinates GTP. Residue Thr-26 participates in Mg(2+) binding. Positions 60–64 (GITIN) are G2. The segment at 81-84 (DCPG) is G3. Residues 81-85 (DCPGH) and 136-139 (NKAD) each bind GTP. The interval 136 to 139 (NKAD) is G4. The G5 stretch occupies residues 174 to 176 (SAL).

It belongs to the TRAFAC class translation factor GTPase superfamily. Classic translation factor GTPase family. EF-Tu/EF-1A subfamily. As to quaternary structure, monomer.

Its subcellular location is the cytoplasm. It catalyses the reaction GTP + H2O = GDP + phosphate + H(+). In terms of biological role, GTP hydrolase that promotes the GTP-dependent binding of aminoacyl-tRNA to the A-site of ribosomes during protein biosynthesis. This is Elongation factor Tu from Staphylococcus carnosus (strain TM300).